We begin with the raw amino-acid sequence, 524 residues long: MDPRELAERLTERDLRILIHLAESGEATPEELAESLDVDLGPVMRSLYWLEERGLIESEEETHEVYELGDEGKEYAEEGLPELRIVEVLRKIGGEGRLEEVLDRAGVPRKLAGPVLGWLRRKGLAEIKREDGETSLVLLEEEPEDVDQSVLEALAAEGSASVEELARKLEMDEEEVEKALKRLSERGDVLRAREETVKKVRLTERGEEVAEHAPEVLERDWITELKPEHLREGTWKEKEFKPYDVKAPTSPTFPGKRHPLKEVINEIRRIFLEMGFVEVSGPLVESSFWNFDALFQPQDHAAREMQDTFYLKEPAEAELPDEEVVEKVRAVHEDGGDTGSRGWGYEWDEGVARKTVLRTHTTAVSVRKLYEVEGPPLKAFSIGRVYRRETVDYKHLPEFHQCEGIVLAKDVSFRDLLGILEEFYRRMGFEEVRFRPAYFPYTVLSVEPEVYFEEKGDWVELGGAGIFRPEVLQPLGFDPDVVCLAWGLGVERLAMLKLGIDDIRDLYMSDLKTLLELPTARARR.

3 residues coordinate L-phenylalanine: Thr362, Tyr441, and Phe467.

This sequence belongs to the class-II aminoacyl-tRNA synthetase family. Phe-tRNA synthetase alpha subunit type 2 subfamily. Tetramer of two alpha and two beta subunits. Mg(2+) is required as a cofactor.

Its subcellular location is the cytoplasm. It catalyses the reaction tRNA(Phe) + L-phenylalanine + ATP = L-phenylalanyl-tRNA(Phe) + AMP + diphosphate + H(+). In Methanopyrus kandleri (strain AV19 / DSM 6324 / JCM 9639 / NBRC 100938), this protein is Phenylalanine--tRNA ligase alpha subunit.